A 368-amino-acid chain; its full sequence is D-alanine--D-alanine ligase (368 aa).

In terms of domain architecture, ATP-grasp spans 151 to 358; sequence KKLLAAEGLP…YGTLVSTLVD (208 aa). ATP is bound at residue 179–234; that stretch reads RSRLHLPVFVKPARGGSSIGITRVAEWAALDDAIAHARRHDPKVIVESGIAGREVE. Mg(2+) contacts are provided by Asp-313, Glu-325, and Asn-327.

Belongs to the D-alanine--D-alanine ligase family. Mg(2+) is required as a cofactor. The cofactor is Mn(2+).

Its subcellular location is the cytoplasm. It carries out the reaction 2 D-alanine + ATP = D-alanyl-D-alanine + ADP + phosphate + H(+). It participates in cell wall biogenesis; peptidoglycan biosynthesis. Cell wall formation. The protein is D-alanine--D-alanine ligase of Rhodococcus opacus (strain B4).